A 338-amino-acid chain; its full sequence is Lipoate-protein ligase A (338 aa).

One can recognise a BPL/LPL catalytic domain in the interval 29 to 216 (DPNQRVLFLW…AFFAHYGARV (188 aa)). ATP-binding positions include arginine 71, 76–79 (GAVF), and lysine 134. Lysine 134 serves as a coordination point for (R)-lipoate.

Belongs to the LplA family. As to quaternary structure, monomer.

The protein localises to the cytoplasm. The enzyme catalyses L-lysyl-[lipoyl-carrier protein] + (R)-lipoate + ATP = N(6)-[(R)-lipoyl]-L-lysyl-[lipoyl-carrier protein] + AMP + diphosphate + H(+). Its pathway is protein modification; protein lipoylation via exogenous pathway; protein N(6)-(lipoyl)lysine from lipoate: step 1/2. The protein operates within protein modification; protein lipoylation via exogenous pathway; protein N(6)-(lipoyl)lysine from lipoate: step 2/2. In terms of biological role, catalyzes both the ATP-dependent activation of exogenously supplied lipoate to lipoyl-AMP and the transfer of the activated lipoyl onto the lipoyl domains of lipoate-dependent enzymes. In Aeromonas salmonicida (strain A449), this protein is Lipoate-protein ligase A.